The primary structure comprises 672 residues: MPVARPEASDARVIAHVDMDCFYVQVEQRKQPELRGLPSAVVQYNEWQGGGLIAVSYEARKCGVKRSMRGDEAKAACPQIQLVQVPVARGKADLNLYRSAGSEVVSILAKSGKCERASIDEVYLDLTDAAESMLADAPPESLELIDEEVLKSHILGMNREDGDDFKESVRNWICREDADRRDKLLSCGIIIVAELRKQVLKETEFTCSAGIAHNKMLAKLASGMNKPAQQTVVPYAAVQELLSSLPIKKMKQLGGKLGTSLQTDLGVDTVGDLLQFSETKLQEHYGVNTGTWLWNIARGISGEEVQGRLLPKSHGSGKTFPGPRALKSLSTVQHWLNQLSEELSERLGSDLEQNKRIASTLTLHASAFRSKDSDSHKKFPSKSCPMRYGVTKIQEDAFNLFQAALREYMGSFGIKPQGNKLETWRITGLSVSASKIVDIPSGTSSIMRYFQSQPTVPSRSADGCVQGNVAMTASASEGCSEQRSTETQAAMPEVDTGVTYTLPNFENQDKDIDLVSEKDVVSCPSNEATDVSTQSESNKGTQTKKIGRKMNNSKEKNRGMPSIVDIFKNYNATPPSKQETQEDSTVSSASKRAKLSSSSHNSQVNQEVEESRETDWGYKTDEIDQSVFDELPVEIQRELRSFLRTNKQFNTGKSKGDGSTSSIAHYFPPLNR.

Positions 14–254 constitute a UmuC domain; it reads IAHVDMDCFY…LPIKKMKQLG (241 aa). Mg(2+)-binding residues include Asp-18 and Met-19. Mn(2+)-binding residues include Asp-18 and Met-19. Residues Tyr-23 and Arg-60 each coordinate a 2'-deoxyribonucleoside 5'-triphosphate. The Mg(2+) site is built by Asp-120 and Glu-121. Mn(2+)-binding residues include Asp-120 and Glu-121. Residue Glu-121 is the Proton acceptor of the active site. DNA-binding regions lie at residues 318–325 and 362–383; these read KTFPGPRA and TLHA…PSKS. Disordered regions lie at residues 521–617 and 648–672; these read VSCP…TDWG and QFNT…PLNR. Composition is skewed to polar residues over residues 523–544 and 570–586; these read CPSN…TQTK and YNAT…DSTV. 2 stretches are compositionally biased toward low complexity: residues 587 to 602 and 651 to 662; these read SSAS…SHNS and TGKSKGDGSTSS.

Belongs to the DNA polymerase type-Y family. In terms of assembly, interacts with PCNA1 and PCNA2. The interaction with PCNA2 is required for translesion synthesis (TLS) to repair UV photoproducts. Requires Mg(2+) as cofactor. It depends on Mn(2+) as a cofactor. In terms of tissue distribution, constitutively expressed in roots, stems, leaves, flowers and siliques.

It localises to the nucleus. The catalysed reaction is DNA(n) + a 2'-deoxyribonucleoside 5'-triphosphate = DNA(n+1) + diphosphate. Its activity is regulated as follows. The enzyme in complex with the DNA substrate binds a third divalent metal cation. The binding of this third divalent cation, which is coordinated by water molecules and two oxygen atoms from DNA and dNTP, is essential for catalyzing the DNA synthesis. In terms of biological role, error-free DNA polymerase specifically involved in DNA repair. Plays an important role in translesion synthesis (TLS), where the normal high fidelity DNA polymerases cannot proceed and DNA synthesis stalls. Plays an important role in the repair of UV-induced pyrimidine dimers and confers resistance to ultraviolet light. Depending on the context, it inserts the correct base, but may cause base transitions and transversions. Forms a Schiff base with 5'-deoxyribose phosphate at abasic sites, but does not have lyase activity. Targets POLI to replication foci. Exhibits cyclobutane dimer nonmutagenic bypass activity in vitro. The polypeptide is DNA polymerase eta (POLH) (Arabidopsis thaliana (Mouse-ear cress)).